The chain runs to 1835 residues: AT-rich interactive domain-containing protein 2 (1835 aa).

Residue alanine 2 is modified to N-acetylalanine. Serine 4 carries the phosphoserine modification. Residues lysine 7, lysine 15, and lysine 119 each participate in a glycyl lysine isopeptide (Lys-Gly) (interchain with G-Cter in SUMO2) cross-link. In terms of domain architecture, ARID spans 13-105 (RRKGLAFLDE…YLEKYEKVHH (93 aa)). The LXXLL signature appears at 313 to 317 (LRFLL). Residues 524–603 (ACQWLNAHFE…IHVVGVKRRA (80 aa)) constitute a DNA-binding region (RFX-type winged-helix). A Glycyl lysine isopeptide (Lys-Gly) (interchain with G-Cter in SUMO2) cross-link involves residue lysine 555. A phosphoserine mark is found at serine 631 and serine 635. The residue at position 653 (threonine 653) is a Phosphothreonine. Serine 689 is subject to Phosphoserine. The residue at position 692 (threonine 692) is a Phosphothreonine. Disordered stretches follow at residues 819–844 (QQLI…QSQD), 962–1057 (LTGQ…SGES), 1266–1287 (MENP…KENE), 1295–1314 (NGRK…KIQS), and 1321–1341 (LISN…KQNS). 3 stretches are compositionally biased toward low complexity: residues 823-843 (TTSP…SQSQ), 985-996 (PTAMSSSSTPQS), and 1025-1044 (QVQV…QPQQ). Phosphoserine is present on serine 1300. Residues 1301–1314 (DSSLPPSNSGKIQS) are compositionally biased toward polar residues. 2 positions are modified to phosphoserine: serine 1391 and serine 1496. Disordered stretches follow at residues 1488-1522 (DSGS…AEDT) and 1572-1629 (SAVQ…RKPG). A compositionally biased stretch (polar residues) spans 1491–1509 (SKVSHSPALSSDVRSTNGT). Positions 1513–1522 (KTVKRPAEDT) are enriched in basic and acidic residues. Residues 1573–1592 (AVQQKQQHPPTYVQNVVPQN) show a composition bias toward polar residues. Low complexity predominate over residues 1602-1623 (QVQGQPNSSQPSPFSGSSQPGD). Residues 1632–1657 (FMCLWQSCKKWFQTPSQVFYHAATEH) form a C2H2-type zinc finger. Glycyl lysine isopeptide (Lys-Gly) (interchain with G-Cter in SUMO2) cross-links involve residues lysine 1701, lysine 1716, and lysine 1731. The interval 1703–1728 (DEPGQAGSQKSSTKQPTVGGTSSTPR) is disordered. A compositionally biased stretch (polar residues) spans 1708–1728 (AGSQKSSTKQPTVGGTSSTPR).

As to quaternary structure, component of the SWI/SNF-B (PBAF) chromatin remodeling complex, at least composed of SMARCA4/BRG1, SMARCB1/BAF47/SNF5, ACTL6A/BAF53A or ACTL6B/BAF53B, SMARCE1/BAF57, SMARCD1/BAF60A, SMARCD2/BAF60B, perhaps SMARCD3/BAF60C, SMARCC1/BAF155, SMARCC2/BAF170, PBRM1/BAF180, ARID2/BAF200 and actin. Interacts with SRF. Forms complexes with SRF and SRF cofactors MYOCD, NKX2-5 and SRFBP1. As to expression, highly expressed in heart.

The protein resides in the nucleus. Its function is as follows. Involved in transcriptional activation and repression of select genes by chromatin remodeling (alteration of DNA-nucleosome topology). Required for the stability of the SWI/SNF chromatin remodeling complex SWI/SNF-B (PBAF). May be involved in targeting the complex to different genes. May be involved in regulating transcriptional activation of cardiac genes. This chain is AT-rich interactive domain-containing protein 2, found in Homo sapiens (Human).